Here is a 195-residue protein sequence, read N- to C-terminus: ATP-dependent Clp protease proteolytic subunit 2 (195 aa).

Ser-92 (nucleophile) is an active-site residue. The active site involves His-117.

Belongs to the peptidase S14 family. Fourteen ClpP subunits assemble into 2 heptameric rings which stack back to back to give a disk-like structure with a central cavity, resembling the structure of eukaryotic proteasomes.

It is found in the cytoplasm. It carries out the reaction Hydrolysis of proteins to small peptides in the presence of ATP and magnesium. alpha-casein is the usual test substrate. In the absence of ATP, only oligopeptides shorter than five residues are hydrolyzed (such as succinyl-Leu-Tyr-|-NHMec, and Leu-Tyr-Leu-|-Tyr-Trp, in which cleavage of the -Tyr-|-Leu- and -Tyr-|-Trp bonds also occurs).. Its function is as follows. Cleaves peptides in various proteins in a process that requires ATP hydrolysis. Has a chymotrypsin-like activity. Plays a major role in the degradation of misfolded proteins. This Rhodococcus jostii (strain RHA1) protein is ATP-dependent Clp protease proteolytic subunit 2.